The primary structure comprises 227 residues: MNDIILTSQKLYKSYHDGTSRVEVLKGVDLAITKGDRIAIIGPSGSGKSTLLHLLGGLDKPTSGLITLGKVDWQKINEKQRCQLRNQQLGFVYQFHHLLPEFTALENVMMPLLLAGMAVKDAEEKAINMLEQVGLKPRLAHKPAQLSGGERQRVAIARALVHQPHCVLADEPTGNLDEATASKVFDLMLELNKKMNTALVIVTHDQRIAERMDRVLVLHEGSLYARE.

The ABC transporter domain occupies 6-227 (LTSQKLYKSY…LHEGSLYARE (222 aa)). Residue 42–49 (GPSGSGKS) coordinates ATP.

Belongs to the ABC transporter superfamily. Lipoprotein translocase (TC 3.A.1.125) family. In terms of assembly, the complex is composed of two ATP-binding proteins (LolD) and two transmembrane proteins (LolC and LolE).

The protein resides in the cell inner membrane. Functionally, part of the ABC transporter complex LolCDE involved in the translocation of mature outer membrane-directed lipoproteins, from the inner membrane to the periplasmic chaperone, LolA. Responsible for the formation of the LolA-lipoprotein complex in an ATP-dependent manner. The sequence is that of Lipoprotein-releasing system ATP-binding protein LolD from Legionella pneumophila (strain Paris).